A 424-amino-acid chain; its full sequence is Glucose-1-phosphate adenylyltransferase (424 aa).

Residues Tyr112, Gly177, 192–193 (EK), and Ser210 each bind alpha-D-glucose 1-phosphate.

The protein belongs to the bacterial/plant glucose-1-phosphate adenylyltransferase family. As to quaternary structure, homotetramer.

The enzyme catalyses alpha-D-glucose 1-phosphate + ATP + H(+) = ADP-alpha-D-glucose + diphosphate. The protein operates within glycan biosynthesis; glycogen biosynthesis. In terms of biological role, involved in the biosynthesis of ADP-glucose, a building block required for the elongation reactions to produce glycogen. Catalyzes the reaction between ATP and alpha-D-glucose 1-phosphate (G1P) to produce pyrophosphate and ADP-Glc. This chain is Glucose-1-phosphate adenylyltransferase, found in Methylococcus capsulatus (strain ATCC 33009 / NCIMB 11132 / Bath).